The following is a 260-amino-acid chain: MAVSAVHLESDAFLVCMNHALSTEKEEVMGLCIGEVDTNRIVHIHSVIILRRSDKRKDRVEISPEQLSSAATEAERLAEMTGRPMRVVGWYHSHPHITVWPSHVDVRTQAMYQMMDQGFVGLIFSCFIEDKNTKTGRVLYTCFQSVQAQKGSEYERIEIPIHVVPHEAIGKVCLESAVELPRILCQEEQDTYRKIHSLTHLDPITKIHNGSVFTKNLCSQMSAVSGPLLQWLEDRLEQNRQSVIELQLEKERLTQELATM.

An MPN domain is found at 6 to 149; it reads VHLESDAFLV…YTCFQSVQAQ (144 aa). Histidine 92, histidine 94, and aspartate 105 together coordinate Zn(2+). Positions 92 to 105 match the JAMM motif motif; that stretch reads HSHPHITVWPSHVD.

This sequence belongs to the peptidase M67A family. BRCC36 subfamily. As to quaternary structure, component of the BRCA1-A complex, at least composed of brca1, bard1, uimc1/rap80, abraxas1, brcc3/brcc36, babam2 and babam1/nba1. In the BRCA1-A complex, interacts directly with abraxas1 and babam2. Component of the BRISC complex, at least composed of abraxas2, brcc3/brcc36, babam2 and babam1/nba1. Within the complex, interacts directly with abraxas2. Both the BRCA1-A complex and the BRISC complex bind polyubiquitin. Zn(2+) is required as a cofactor.

The protein localises to the nucleus. It localises to the cytoplasm. The protein resides in the cytoskeleton. It is found in the spindle pole. Its function is as follows. Metalloprotease that specifically cleaves 'Lys-63'-linked polyubiquitin chains. Does not have activity toward 'Lys-48'-linked polyubiquitin chains. Component of the BRCA1-A complex, a complex that specifically recognizes 'Lys-63'-linked ubiquitinated histones H2A and H2AX at DNA lesions sites, leading to target the brca1-bard1 heterodimer to sites of DNA damage at double-strand breaks (DSBs). In the BRCA1-A complex, it specifically removes 'Lys-63'-linked ubiquitin on histones H2A and H2AX, antagonizing the rnf8-dependent ubiquitination at double-strand breaks (DSBs). Catalytic subunit of the BRISC complex, a multiprotein complex that specifically cleaves 'Lys-63'-linked ubiquitin in various substrates. Mediates the specific 'Lys-63'-specific deubiquitination associated with the COP9 signalosome complex (CSN), via the interaction of the BRISC complex with the CSN complex. The BRISC complex is required for normal mitotic spindle assembly and microtubule attachment to kinetochores via its role in deubiquitinating numa1. Plays a role in interferon signaling via its role in the deubiquitination of the interferon receptor ifnar1; deubiquitination increases ifnar1 activity by enhancing its stability and cell surface expression. Acts as a regulator of the NLRP3 inflammasome by mediating deubiquitination of nlrp3. Down-regulates the response to bacterial lipopolysaccharide (LPS) via its role in ifnar1 deubiquitination. The polypeptide is Lys-63-specific deubiquitinase BRCC36 (brcc3) (Salmo salar (Atlantic salmon)).